A 390-amino-acid polypeptide reads, in one-letter code: Ureide permease 1 (390 aa).

Residues 1–9 lie on the Extracellular side of the membrane; that stretch reads MYMIESKGG. A helical membrane pass occupies residues 10-30; that stretch reads AIACMLLALLFLGTWPAIMTL. At 31-44 the chain is on the cytoplasmic side; the sequence is TERRGRLPQHTYLD. A helical membrane pass occupies residues 45–65; the sequence is YTLTNLLAAVIIALTLGEIGP. Over 66–78 the chain is Extracellular; sequence SRPNFFTQLSQDN. A helical membrane pass occupies residues 79-99; that stretch reads WQSVMFAMAGGIVLSLGNLAT. The Cytoplasmic segment spans residues 100-101; the sequence is QY. The chain crosses the membrane as a helical span at residues 102 to 122; that stretch reads AWAYVGLSVTEVITASITVVI. The Extracellular segment spans residues 123 to 136; it reads GTTLNYFLDDRINR. Residues 137–157 form a helical membrane-spanning segment; the sequence is AEVLFPGVACFLIAVCFGSAV. Over 158–221 the chain is Cytoplasmic; sequence HKSNAADNKT…RAIKVFGKST (64 aa). 213–220 is an ATP binding site; that stretch reads AIKVFGKS. The helical transmembrane segment at 222-242 threads the bilayer; the sequence is IIGLVITFFAGICFSLFSPAF. The Extracellular segment spans residues 243–261; sequence NLATNDQWHTLKHGVPKLN. The chain crosses the membrane as a helical span at residues 262–282; sequence VYTAFFYFSISAFVVALILNI. Over 283 to 307 the chain is Cytoplasmic; it reads RFLYWPILGLPRSSFKAYLNDWNGR. A helical membrane pass occupies residues 308–328; the sequence is GWSFLAGFLCGFGNGLQFMGG. Over 329–333 the chain is Extracellular; the sequence is QAAGY. Residues 334–354 traverse the membrane as a helical segment; it reads AAADAVQALPLVSTFWGILLF. Residues 355 to 363 are Cytoplasmic-facing; it reads GEYRRSSRK. Residues 364-384 traverse the membrane as a helical segment; that stretch reads TYTLLISMLLMFIVAVAVLMA. The Extracellular segment spans residues 385–390; sequence SSGHRK.

It belongs to the plant ureide permease (TC 2.A.7.19) family. Expressed in leaves, flowers, roots and stems.

It is found in the membrane. Its function is as follows. Proton-coupled transporter that transports a wide spectrum of oxo derivatives of heterocyclic nitrogen compounds, including allantoin, uric acid and xanthine, but not adenine. Mediates high affinity transport of uracil and 5-fluorouracil (a toxic uracil analog). Mediates transport of free pyrimidines and may function during early seedling development in salvage pathways, by the utilization of pyrimidines from seed storage tissue. This Arabidopsis thaliana (Mouse-ear cress) protein is Ureide permease 1.